The primary structure comprises 477 residues: Serine/threonine protein phosphatase 2A 55 kDa regulatory subunit B' delta isoform (477 aa).

Belongs to the phosphatase 2A regulatory subunit B56 family. In terms of assembly, PP2A consists of a common heteromeric enzyme, composed of a catalytic subunit (subunits C), a constant regulatory subunit (subunit A), and a variety of regulatory subunits such as subunits B (the R2/B/PR55/B55, R3/B''/PR72/PR130/PR59 and R5/B'/B56 families). Interacts with SRK2E/OST1. In terms of tissue distribution, expressed ubiquitously.

It localises to the cytoplasm. Its function is as follows. The B regulatory subunit may modulate substrate selectivity and catalytic activity, and may also direct the localization of the catalytic enzyme to a particular subcellular compartment. This is Serine/threonine protein phosphatase 2A 55 kDa regulatory subunit B' delta isoform (B'DELTA) from Arabidopsis thaliana (Mouse-ear cress).